A 309-amino-acid polypeptide reads, in one-letter code: Aspartate carbamoyltransferase catalytic subunit (309 aa).

The carbamoyl phosphate site is built by Arg55 and Thr56. An L-aspartate-binding site is contributed by Lys85. Carbamoyl phosphate is bound by residues Arg106, His135, and Gln138. L-aspartate-binding residues include Arg168 and Arg230. Residues Leu268 and Pro269 each contribute to the carbamoyl phosphate site.

The protein belongs to the aspartate/ornithine carbamoyltransferase superfamily. ATCase family. In terms of assembly, heterododecamer (2C3:3R2) of six catalytic PyrB chains organized as two trimers (C3), and six regulatory PyrI chains organized as three dimers (R2).

It catalyses the reaction carbamoyl phosphate + L-aspartate = N-carbamoyl-L-aspartate + phosphate + H(+). The protein operates within pyrimidine metabolism; UMP biosynthesis via de novo pathway; (S)-dihydroorotate from bicarbonate: step 2/3. In terms of biological role, catalyzes the condensation of carbamoyl phosphate and aspartate to form carbamoyl aspartate and inorganic phosphate, the committed step in the de novo pyrimidine nucleotide biosynthesis pathway. The sequence is that of Aspartate carbamoyltransferase catalytic subunit from Photobacterium profundum (strain SS9).